The chain runs to 345 residues: Protein arginine N-methyltransferase 1 (345 aa).

Positions 24–345 constitute an SAM-dependent MTase PRMT-type domain; that stretch reads ADYYFDSYSH…VKNTQQYRMR (322 aa). S-adenosyl-L-methionine contacts are provided by histidine 37, arginine 46, glycine 70, glutamate 92, and glutamate 121. Active-site residues include glutamate 136 and glutamate 145.

It belongs to the class I-like SAM-binding methyltransferase superfamily. Protein arginine N-methyltransferase family. Post-translationally, phosphorylated during flagellum resorption.

The protein resides in the nucleus. It localises to the cell projection. It is found in the cilium. The protein localises to the flagellum. It carries out the reaction L-arginyl-[protein] + S-adenosyl-L-methionine = N(omega)-methyl-L-arginyl-[protein] + S-adenosyl-L-homocysteine + H(+). The enzyme catalyses L-arginyl-[protein] + 2 S-adenosyl-L-methionine = N(omega),N(omega)-dimethyl-L-arginyl-[protein] + 2 S-adenosyl-L-homocysteine + 2 H(+). Arginine methyltransferase that methylates (mono and asymmetric dimethylation) the guanidino nitrogens of arginyl residues present in target proteins. Mediates asymmetric dimethylation of components of the axoneme during flagellum resorption, such as CCDC40/FAP172, CCDC65/FAP250, RSP1, RSP2, RPS5, RSP6, and tektin. The sequence is that of Protein arginine N-methyltransferase 1 (PRMT1) from Chlamydomonas reinhardtii (Chlamydomonas smithii).